The primary structure comprises 444 residues: Homogentisate 1,2-dioxygenase (444 aa).

Catalysis depends on H298, which acts as the Proton acceptor. Fe cation-binding residues include H341 and E347. Homogentisate-binding residues include Y356 and H377. Fe cation is bound at residue H377.

This sequence belongs to the homogentisate dioxygenase family. Hexamer; dimer of trimers. It depends on Fe cation as a cofactor.

It carries out the reaction homogentisate + O2 = 4-maleylacetoacetate + H(+). It participates in amino-acid degradation; L-phenylalanine degradation; acetoacetate and fumarate from L-phenylalanine: step 4/6. Involved in the catabolism of homogentisate (2,5-dihydroxyphenylacetate or 2,5-OH-PhAc), a central intermediate in the degradation of phenylalanine and tyrosine. Catalyzes the oxidative ring cleavage of the aromatic ring of homogentisate to yield maleylacetoacetate. The polypeptide is Homogentisate 1,2-dioxygenase (Burkholderia lata (strain ATCC 17760 / DSM 23089 / LMG 22485 / NCIMB 9086 / R18194 / 383)).